We begin with the raw amino-acid sequence, 350 residues long: MTNYFRSNVEAMASYVPGEQPPRGTQVIKLNSNENPYPPSPAALAALQDIDGEWLRRYPEPLGGEFREAASKVLGVPSDWLIVGNGSDEILSIVIRACTEPGRKVVYPMPTYVLYRTLTQMQAADILEIPYQENNVLPVAELIAADGAVTFIASPNSPSGHIVPNDDLRKLASELSGVLVIDEAYVDFAEESALDLVQEYENVILIRTLSKGYSLAGLRLGFGVGNPKLLDGLFKVKDSYNIDAIACKVAAVAITDQAYKNSCVAKVKASRTQLTKDLKQLGFHVWDSHGNFLLTKPPEGNAEYLYEKLKEQKILIRYFQQPGLEDKLRITVGTDEQNHILVRALRDLLR.

Lysine 211 carries the N6-(pyridoxal phosphate)lysine modification.

It belongs to the class-II pyridoxal-phosphate-dependent aminotransferase family. Histidinol-phosphate aminotransferase subfamily. In terms of assembly, homodimer. It depends on pyridoxal 5'-phosphate as a cofactor.

The enzyme catalyses L-histidinol phosphate + 2-oxoglutarate = 3-(imidazol-4-yl)-2-oxopropyl phosphate + L-glutamate. It functions in the pathway amino-acid biosynthesis; L-histidine biosynthesis; L-histidine from 5-phospho-alpha-D-ribose 1-diphosphate: step 7/9. This Trichormus variabilis (strain ATCC 29413 / PCC 7937) (Anabaena variabilis) protein is Histidinol-phosphate aminotransferase 1.